Here is a 282-residue protein sequence, read N- to C-terminus: Aldo-keto reductase ML1669 (282 aa).

Tyr57 acts as the Proton donor in catalysis. Positions 197, 235, 237, 238, 239, 246, 247, and 273 each coordinate NADPH.

The protein belongs to the aldo/keto reductase family.

The sequence is that of Aldo-keto reductase ML1669 from Mycobacterium leprae (strain TN).